We begin with the raw amino-acid sequence, 94 residues long: Co-chaperonin GroES (94 aa).

Belongs to the GroES chaperonin family. In terms of assembly, heptamer of 7 subunits arranged in a ring. Interacts with the chaperonin GroEL.

It localises to the cytoplasm. Its function is as follows. Together with the chaperonin GroEL, plays an essential role in assisting protein folding. The GroEL-GroES system forms a nano-cage that allows encapsulation of the non-native substrate proteins and provides a physical environment optimized to promote and accelerate protein folding. GroES binds to the apical surface of the GroEL ring, thereby capping the opening of the GroEL channel. This chain is Co-chaperonin GroES, found in Clostridium botulinum (strain Alaska E43 / Type E3).